Consider the following 79-residue polypeptide: Large ribosomal subunit protein uL24 (79 aa).

It belongs to the universal ribosomal protein uL24 family. In terms of assembly, part of the 50S ribosomal subunit.

Its function is as follows. One of two assembly initiator proteins, it binds directly to the 5'-end of the 23S rRNA, where it nucleates assembly of the 50S subunit. In terms of biological role, one of the proteins that surrounds the polypeptide exit tunnel on the outside of the subunit. The polypeptide is Large ribosomal subunit protein uL24 (Lactobacillus delbrueckii subsp. bulgaricus (strain ATCC 11842 / DSM 20081 / BCRC 10696 / JCM 1002 / NBRC 13953 / NCIMB 11778 / NCTC 12712 / WDCM 00102 / Lb 14)).